The following is a 424-amino-acid chain: Enolase (424 aa).

Position 162 (Q162) interacts with (2R)-2-phosphoglycerate. Catalysis depends on E204, which acts as the Proton donor. Positions 241, 284, and 311 each coordinate Mg(2+). 4 residues coordinate (2R)-2-phosphoglycerate: K336, R365, S366, and K387. K336 functions as the Proton acceptor in the catalytic mechanism.

Belongs to the enolase family. Mg(2+) serves as cofactor.

It localises to the cytoplasm. The protein resides in the secreted. Its subcellular location is the cell surface. It carries out the reaction (2R)-2-phosphoglycerate = phosphoenolpyruvate + H2O. The protein operates within carbohydrate degradation; glycolysis; pyruvate from D-glyceraldehyde 3-phosphate: step 4/5. Catalyzes the reversible conversion of 2-phosphoglycerate (2-PG) into phosphoenolpyruvate (PEP). It is essential for the degradation of carbohydrates via glycolysis. This chain is Enolase, found in Agrobacterium fabrum (strain C58 / ATCC 33970) (Agrobacterium tumefaciens (strain C58)).